We begin with the raw amino-acid sequence, 567 residues long: Zinc finger protein 143 (567 aa).

7 consecutive C2H2-type zinc fingers follow at residues 230–254, 260–284, 290–314, 320–344, 350–374, 380–404, and 410–433; these read FRCDYEGCGKLYTTAHHLKVHERSH, YQCDHGGCRKAFATGYGLKSHVRTH, YRCSEENCTKSFKTSGDLQKHVRTH, FKCPFEGCGRSFTTSNIRKVHIRTH, YYCSEPGCGRAFASATNYKNHVRIH, YVCTVPGCDKRFTEYSSLYKHHVVH, and YNCNHCGKTYKQISTLAMHKRTAH. The span at 506–520 shows a compositional bias: polar residues; it reads SATESGPQHSHNLGG. A disordered region spans residues 506–525; that stretch reads SATESGPQHSHNLGGSESRP.

It belongs to the GLI C2H2-type zinc-finger protein family.

It is found in the nucleus. In terms of biological role, transcriptional activator. Activates the gene for selenocysteine tRNA (tRNAsec). Binds to the activator element (AE) motif of the selenocysteine tRNA gene promoter. The sequence is that of Zinc finger protein 143 (znf143) from Xenopus tropicalis (Western clawed frog).